The sequence spans 63 residues: Large ribosomal subunit protein bL28 (63 aa).

Belongs to the bacterial ribosomal protein bL28 family.

This is Large ribosomal subunit protein bL28 from Sulfurihydrogenibium sp. (strain YO3AOP1).